Reading from the N-terminus, the 556-residue chain is Urocanate hydratase (556 aa).

NAD(+) is bound by residues 52-53 (GG), Gln130, 176-178 (GMG), Glu196, Arg201, 243-244 (NA), 264-268 (QTSAH), 274-275 (YL), and Tyr323. The active site involves Cys411. Gly493 is an NAD(+) binding site.

Belongs to the urocanase family. Requires NAD(+) as cofactor.

The protein resides in the cytoplasm. The enzyme catalyses 4-imidazolone-5-propanoate = trans-urocanate + H2O. It functions in the pathway amino-acid degradation; L-histidine degradation into L-glutamate; N-formimidoyl-L-glutamate from L-histidine: step 2/3. Its function is as follows. Catalyzes the conversion of urocanate to 4-imidazolone-5-propionate. The protein is Urocanate hydratase of Rhodospirillum rubrum (strain ATCC 11170 / ATH 1.1.1 / DSM 467 / LMG 4362 / NCIMB 8255 / S1).